A 207-amino-acid polypeptide reads, in one-letter code: Octanoyltransferase (207 aa).

The BPL/LPL catalytic domain maps to 27–202; it reads GETPDELWIV…HLETRLARPQ (176 aa). Residues 66–73, 133–135, and 146–148 each bind substrate; these read RGGQITYH, SLG, and GLS. Cys164 serves as the catalytic Acyl-thioester intermediate.

It belongs to the LipB family.

Its subcellular location is the cytoplasm. The enzyme catalyses octanoyl-[ACP] + L-lysyl-[protein] = N(6)-octanoyl-L-lysyl-[protein] + holo-[ACP] + H(+). Its pathway is protein modification; protein lipoylation via endogenous pathway; protein N(6)-(lipoyl)lysine from octanoyl-[acyl-carrier-protein]: step 1/2. In terms of biological role, catalyzes the transfer of endogenously produced octanoic acid from octanoyl-acyl-carrier-protein onto the lipoyl domains of lipoate-dependent enzymes. Lipoyl-ACP can also act as a substrate although octanoyl-ACP is likely to be the physiological substrate. In Laribacter hongkongensis (strain HLHK9), this protein is Octanoyltransferase.